Reading from the N-terminus, the 157-residue chain is S-ribosylhomocysteine lyase (157 aa).

Residues H54, H58, and C126 each contribute to the Fe cation site.

Belongs to the LuxS family. As to quaternary structure, homodimer. Fe cation serves as cofactor.

The enzyme catalyses S-(5-deoxy-D-ribos-5-yl)-L-homocysteine = (S)-4,5-dihydroxypentane-2,3-dione + L-homocysteine. Its function is as follows. Involved in the synthesis of autoinducer 2 (AI-2) which is secreted by bacteria and is used to communicate both the cell density and the metabolic potential of the environment. The regulation of gene expression in response to changes in cell density is called quorum sensing. Catalyzes the transformation of S-ribosylhomocysteine (RHC) to homocysteine (HC) and 4,5-dihydroxy-2,3-pentadione (DPD). The sequence is that of S-ribosylhomocysteine lyase from Bacillus cereus (strain 03BB102).